The chain runs to 200 residues: Cytochrome c biogenesis ATP-binding export protein CcmA (200 aa).

Residues 2-200 (LDVIELDFDY…NKADYEEYHL (199 aa)) enclose the ABC transporter domain. 34–41 (GSNGAGKT) contacts ATP.

Belongs to the ABC transporter superfamily. CcmA exporter (TC 3.A.1.107) family. As to quaternary structure, the complex is composed of two ATP-binding proteins (CcmA) and two transmembrane proteins (CcmB).

It is found in the cell inner membrane. It catalyses the reaction heme b(in) + ATP + H2O = heme b(out) + ADP + phosphate + H(+). In terms of biological role, part of the ABC transporter complex CcmAB involved in the biogenesis of c-type cytochromes; once thought to export heme, this seems not to be the case, but its exact role is uncertain. Responsible for energy coupling to the transport system. The polypeptide is Cytochrome c biogenesis ATP-binding export protein CcmA (Legionella pneumophila (strain Lens)).